A 276-amino-acid polypeptide reads, in one-letter code: Diaminopimelate epimerase (276 aa).

Substrate-binding residues include Asn-13, Gln-46, and Asn-66. Residue Cys-75 is the Proton donor of the active site. Substrate contacts are provided by residues Gly-76 to Asn-77, Asn-159, Asn-192, and Glu-210 to Arg-211. Cys-219 serves as the catalytic Proton acceptor. Gly-220–Thr-221 contacts substrate.

This sequence belongs to the diaminopimelate epimerase family. As to quaternary structure, homodimer.

The protein resides in the cytoplasm. It catalyses the reaction (2S,6S)-2,6-diaminopimelate = meso-2,6-diaminopimelate. It functions in the pathway amino-acid biosynthesis; L-lysine biosynthesis via DAP pathway; DL-2,6-diaminopimelate from LL-2,6-diaminopimelate: step 1/1. Catalyzes the stereoinversion of LL-2,6-diaminopimelate (L,L-DAP) to meso-diaminopimelate (meso-DAP), a precursor of L-lysine and an essential component of the bacterial peptidoglycan. The protein is Diaminopimelate epimerase of Aeromonas hydrophila subsp. hydrophila (strain ATCC 7966 / DSM 30187 / BCRC 13018 / CCUG 14551 / JCM 1027 / KCTC 2358 / NCIMB 9240 / NCTC 8049).